Reading from the N-terminus, the 583-residue chain is Protein LONG AFTER FAR-RED 3 (583 aa).

Residues 7-27 (FPVMIGFVSAAVFLLISVAYL) traverse the membrane as a helical segment. Residues asparagine 55 and asparagine 374 are each glycosylated (N-linked (GlcNAc...) asparagine).

It belongs to the metallo-dependent hydrolases superfamily. As to expression, expressed at low level in seedlings, roots, leaves, stems, flowers, and siliques.

Its subcellular location is the membrane. The protein localises to the cytoplasm. It is found in the perinuclear region. Its function is as follows. Required for phyA-controlled responses to continuous far-red light (FRc) conditions, including the inhibition of hypocotyl elongation and the regulation of XTH15/XTR7 expression. The polypeptide is Protein LONG AFTER FAR-RED 3 (Arabidopsis thaliana (Mouse-ear cress)).